Consider the following 188-residue polypeptide: FMN reductase (NADH) RutF (188 aa).

The protein belongs to the non-flavoprotein flavin reductase family. RutF subfamily.

The catalysed reaction is FMNH2 + NAD(+) = FMN + NADH + 2 H(+). Catalyzes the reduction of FMN to FMNH2 which is used to reduce pyrimidine by RutA via the Rut pathway. The chain is FMN reductase (NADH) RutF from Acinetobacter baylyi (strain ATCC 33305 / BD413 / ADP1).